The primary structure comprises 551 residues: Solute carrier family 22 member 27 (551 aa).

At 1–15 (MSFQELLNQVGSLGR) the chain is on the cytoplasmic side. The helical transmembrane segment at 16-36 (FQILQIVFLLLLNAIVVPHIA) threads the bilayer. At 37–145 (MENFTAAIPN…DLVCESQALN (109 aa)) the chain is on the extracellular side. N-linked (GlcNAc...) asparagine glycans are attached at residues Asn-39, Asn-56, Asn-62, Asn-102, and Asn-107. A helical transmembrane segment spans residues 146–166 (SVTKFSFMIGLFIGGIICGHL). Residues 167 to 173 (SDRLGRK) lie on the Cytoplasmic side of the membrane. The helical transmembrane segment at 174-194 (FILTCALLQFAITETCVAFAP) threads the bilayer. At 195-203 (SFFIYCSLR) the chain is on the extracellular side. The chain crosses the membrane as a helical span at residues 204-224 (FLAGLSVEPILVNSHLLMLEW). Residues 225–234 (TSPKFLTMMA) lie on the Cytoplasmic side of the membrane. The chain crosses the membrane as a helical span at residues 235–255 (ALLSCAPNIGYMISAGLAFLF). At 256–258 (RIW) the chain is on the extracellular side. A helical membrane pass occupies residues 259–279 (HHLQLTMSVPIFFFLILTRWL). Residues 280-348 (SESARWLIVT…LFHTSILRKR (69 aa)) lie on the Cytoplasmic side of the membrane. A helical transmembrane segment spans residues 349–369 (ICVLSFMRLFFTVSIFGLAVH). The Extracellular segment spans residues 370 to 376 (LQHLSSN). A helical membrane pass occupies residues 377 to 397 (IILLQFLISALAILVSVIGPF). Residues 398–405 (VLNHIGRR) lie on the Cytoplasmic side of the membrane. The chain crosses the membrane as a helical span at residues 406 to 426 (ITYLVLMSLRGIFILIAVFVP). Topologically, residues 427–432 (QEMQTL) are extracellular. Residues 433–453 (RIIMATLAEGISSLCVGVSRL) form a helical membrane-spanning segment. Topologically, residues 454 to 467 (HTNELLPTTLRATA) are cytoplasmic. Residues 468–488 (VGVIGFFGNSGSFLSPLFMLL) traverse the membrane as a helical segment. At 489 to 494 (ATYYAN) the chain is on the extracellular side. The helical transmembrane segment at 495 to 515 (MPWIFYGGFSIFNAFTVFLLP) threads the bilayer. Residues 516-551 (ETKNQPLPDSTHDVGNDWKESRKGKKEDPIIKVTRF) lie on the Cytoplasmic side of the membrane. The interval 523–551 (PDSTHDVGNDWKESRKGKKEDPIIKVTRF) is disordered. Positions 525 to 545 (STHDVGNDWKESRKGKKEDPI) are enriched in basic and acidic residues.

It belongs to the major facilitator (TC 2.A.1) superfamily. Organic cation transporter (TC 2.A.1.19) family. Expressed in proximal kidney tubules, and in liver hepatocytes (at protein level).

The protein resides in the cell membrane. Functionally, does not appear to have transporter activity. In terms of biological role, sodium-independent organic anion transporter which exhibits high specificity for L-carnitine. Can also transport salicylic acid and the drug cimetidine. This chain is Solute carrier family 22 member 27, found in Mus musculus (Mouse).